A 393-amino-acid chain; its full sequence is Phosphopentomutase (393 aa).

The Mn(2+) site is built by Asp-13, Asp-286, His-291, Asp-327, His-328, and His-339.

Belongs to the phosphopentomutase family. Mn(2+) is required as a cofactor.

The protein resides in the cytoplasm. It carries out the reaction 2-deoxy-alpha-D-ribose 1-phosphate = 2-deoxy-D-ribose 5-phosphate. The catalysed reaction is alpha-D-ribose 1-phosphate = D-ribose 5-phosphate. Its pathway is carbohydrate degradation; 2-deoxy-D-ribose 1-phosphate degradation; D-glyceraldehyde 3-phosphate and acetaldehyde from 2-deoxy-alpha-D-ribose 1-phosphate: step 1/2. In terms of biological role, isomerase that catalyzes the conversion of deoxy-ribose 1-phosphate (dRib-1-P) and ribose 1-phosphate (Rib-1-P) to deoxy-ribose 5-phosphate (dRib-5-P) and ribose 5-phosphate (Rib-5-P), respectively. This Symbiobacterium thermophilum (strain DSM 24528 / JCM 14929 / IAM 14863 / T) protein is Phosphopentomutase.